A 490-amino-acid polypeptide reads, in one-letter code: Betaine aldehyde dehydrogenase (490 aa).

Positions 26, 27, and 93 each coordinate K(+). Position 150–152 (150–152 (GAW)) interacts with NAD(+). Lysine 162 functions as the Charge relay system in the catalytic mechanism. An NAD(+)-binding site is contributed by 176 to 179 (KPSE). Valine 180 contributes to the K(+) binding site. 230 to 233 (GVAT) is an NAD(+) binding site. Leucine 246 provides a ligand contact to K(+). Catalysis depends on glutamate 252, which acts as the Proton acceptor. Residues glycine 254, cysteine 286, and glutamate 387 each coordinate NAD(+). Cysteine 286 (nucleophile) is an active-site residue. Residue cysteine 286 is modified to Cysteine sulfenic acid (-SOH). Residues lysine 457 and glycine 460 each coordinate K(+). The active-site Charge relay system is the glutamate 464.

Belongs to the aldehyde dehydrogenase family. In terms of assembly, dimer of dimers. The cofactor is K(+).

It carries out the reaction betaine aldehyde + NAD(+) + H2O = glycine betaine + NADH + 2 H(+). It participates in amine and polyamine biosynthesis; betaine biosynthesis via choline pathway; betaine from betaine aldehyde: step 1/1. Involved in the biosynthesis of the osmoprotectant glycine betaine. Catalyzes the irreversible oxidation of betaine aldehyde to the corresponding acid. This chain is Betaine aldehyde dehydrogenase, found in Stutzerimonas stutzeri (strain A1501) (Pseudomonas stutzeri).